We begin with the raw amino-acid sequence, 155 residues long: Protein FAM162A (155 aa).

A required for proapoptotic activity region spans residues 77–103 (RFKKEEEIPETISFEMLDAAKNKIRVK). The chain crosses the membrane as a helical span at residues 102–121 (VKVSYLMIALTVAGCVYMVI).

The protein belongs to the UPF0389 family. In terms of assembly, interacts with HSP90AB1; HSP90AB1 is essential for FAM162A mitochondrial localization and pro-apoptotic activity. Interacts with VDAC2; the interaction is probably involved in inducing mitochondrial permeability transition.

Its subcellular location is the mitochondrion membrane. Its function is as follows. Proposed to be involved in regulation of apoptosis; the exact mechanism may differ between cell types/tissues. May be involved in hypoxia-induced cell death of transformed cells implicating cytochrome C release and caspase activation (such as CASP9) and inducing mitochondrial permeability transition. May be involved in hypoxia-induced cell death of neuronal cells probably by promoting release of AIFM1 from mitochondria to cytoplasm and its translocation to the nucleus; however, the involvement of caspases has been reported conflictingly. The polypeptide is Protein FAM162A (Fam162a) (Rattus norvegicus (Rat)).